Consider the following 409-residue polypeptide: N-acetylglucosamine-6-phosphate deacetylase (409 aa).

Glu143 lines the a divalent metal cation pocket. 154 to 155 is a binding site for substrate; it reads AH. A divalent metal cation is bound by residues His211 and His232. Substrate-binding positions include 235–236, Arg243, and 269–272; these read NA and DGIH. The Proton donor/acceptor role is filled by Asp294. 328 to 330 contributes to the substrate binding site; sequence LSG.

Belongs to the metallo-dependent hydrolases superfamily. NagA family. A divalent metal cation serves as cofactor.

The catalysed reaction is N-acetyl-D-glucosamine 6-phosphate + H2O = D-glucosamine 6-phosphate + acetate. It functions in the pathway amino-sugar metabolism; N-acetylneuraminate degradation. Hydrolyzes the N-glycolyl group from N-glycolylglucosamine 6-phosphate (GlcNGc-6-P) in the N-glycolylneuraminic acid (Neu5Gc) degradation pathway. This Bos taurus (Bovine) protein is N-acetylglucosamine-6-phosphate deacetylase (AMDHD2).